Reading from the N-terminus, the 280-residue chain is uncharacterized protein (280 aa).

3 helical membrane-spanning segments follow: residues 10–29 (IQQN…LLFN), 164–186 (FVFV…FAFI), and 209–228 (IFGL…YFLL).

The protein resides in the cell membrane. This is an uncharacterized protein from Bacillus subtilis (strain 168).